Here is a 438-residue protein sequence, read N- to C-terminus: Adenosylhomocysteinase (438 aa).

3 residues coordinate substrate: T64, D139, and E164. 165 to 167 (TTT) contributes to the NAD(+) binding site. Substrate contacts are provided by K194 and D198. Residues N199, 228 to 233 (GYGDVG), E251, N286, 307 to 309 (IGH), and N352 contribute to the NAD(+) site.

The protein belongs to the adenosylhomocysteinase family. Requires NAD(+) as cofactor.

It localises to the cytoplasm. It carries out the reaction S-adenosyl-L-homocysteine + H2O = L-homocysteine + adenosine. It participates in amino-acid biosynthesis; L-homocysteine biosynthesis; L-homocysteine from S-adenosyl-L-homocysteine: step 1/1. In terms of biological role, may play a key role in the regulation of the intracellular concentration of adenosylhomocysteine. This is Adenosylhomocysteinase from Coxiella burnetii (strain CbuK_Q154) (Coxiella burnetii (strain Q154)).